Consider the following 74-residue polypeptide: UPF0435 protein GTNG_0390 (74 aa).

Belongs to the UPF0435 family.

This Geobacillus thermodenitrificans (strain NG80-2) protein is UPF0435 protein GTNG_0390.